Consider the following 126-residue polypeptide: Phosphoribosyl-AMP cyclohydrolase (126 aa).

D82 provides a ligand contact to Mg(2+). C83 is a Zn(2+) binding site. The Mg(2+) site is built by D84 and D86. The Zn(2+) site is built by C99 and C106.

The protein belongs to the PRA-CH family. Homodimer. It depends on Mg(2+) as a cofactor. The cofactor is Zn(2+).

Its subcellular location is the cytoplasm. It carries out the reaction 1-(5-phospho-beta-D-ribosyl)-5'-AMP + H2O = 1-(5-phospho-beta-D-ribosyl)-5-[(5-phospho-beta-D-ribosylamino)methylideneamino]imidazole-4-carboxamide. It participates in amino-acid biosynthesis; L-histidine biosynthesis; L-histidine from 5-phospho-alpha-D-ribose 1-diphosphate: step 3/9. Its function is as follows. Catalyzes the hydrolysis of the adenine ring of phosphoribosyl-AMP. The chain is Phosphoribosyl-AMP cyclohydrolase from Sphingopyxis alaskensis (strain DSM 13593 / LMG 18877 / RB2256) (Sphingomonas alaskensis).